Here is a 91-residue protein sequence, read N- to C-terminus: Potassium channel toxin BmTXK-beta-2 (91 aa).

Positions 1 to 19 are cleaved as a signal peptide; that stretch reads MQRNLVVLLFLGMVALSSC. Residues 20–27 constitute a propeptide that is removed on maturation; it reads GLREKHFQ. The region spanning 54 to 91 is the BetaSPN-type CS-alpha/beta domain; sequence QFGCPAYQGYCDDHCQDIKKEEGFCHGFKCKCGIPMGF. 3 disulfides stabilise this stretch: cysteine 57/cysteine 78, cysteine 64/cysteine 83, and cysteine 68/cysteine 85.

Belongs to the long chain scorpion toxin family. Class 1 subfamily. As to expression, expressed by the venom gland.

The protein localises to the secreted. In terms of biological role, inhibits voltage-gated potassium channel. The chain is Potassium channel toxin BmTXK-beta-2 from Olivierus martensii (Manchurian scorpion).